The chain runs to 292 residues: Protein PHR1-LIKE 3 (292 aa).

An HTH myb-type domain is found at 34–94; it reads TDPKPRLRWT…HLQKFRLGRQ (61 aa). The segment at residues 65 to 90 is a DNA-binding region (H-T-H motif); it reads PKTIMRTMGVKGLTLYHLKSHLQKFR. The stretch at 137–157 forms a coiled coil; sequence TEALRAQMEVQRRLHEQLEVQ. Residues 150–155 carry the LHEQLE motif; it reads LHEQLE.

This sequence belongs to the MYB-CC family. As to quaternary structure, homo- and heterodimers. Interacts with PHL2, but not with PHR1.

It is found in the nucleus. Its function is as follows. Transcriptional activator. Probable component of the central regulatory system controlling transcriptional responses to Pi starvation. Binds in a sequence-specific manner to phosphate starvation-regulated promoters. Required for female gametophyte development and function. This Arabidopsis thaliana (Mouse-ear cress) protein is Protein PHR1-LIKE 3.